The sequence spans 469 residues: Adenosylhomocysteinase (469 aa).

Thr-63, Asp-139, and Glu-164 together coordinate substrate. 165 to 167 (TTT) provides a ligand contact to NAD(+). Substrate is bound by residues Lys-194 and Asp-198. NAD(+) is bound by residues Asn-199, 228–233 (GYGDVG), Glu-251, Asn-300, 321–323 (IGH), and Asn-375.

Belongs to the adenosylhomocysteinase family. It depends on NAD(+) as a cofactor.

Its subcellular location is the cytoplasm. The enzyme catalyses S-adenosyl-L-homocysteine + H2O = L-homocysteine + adenosine. Its pathway is amino-acid biosynthesis; L-homocysteine biosynthesis; L-homocysteine from S-adenosyl-L-homocysteine: step 1/1. Its function is as follows. May play a key role in the regulation of the intracellular concentration of adenosylhomocysteine. The chain is Adenosylhomocysteinase from Pseudomonas syringae pv. syringae (strain B728a).